The following is a 325-amino-acid chain: Melanocortin receptor 5 (325 aa).

Residues 1 to 37 (MNSSFHLHFLDLGLNTTDGNLSGLSVQNASSLCEDMG) are Extracellular-facing. Asn-2, Asn-15, Asn-20, and Asn-28 each carry an N-linked (GlcNAc...) asparagine glycan. The helical transmembrane segment at 38–61 (IAVEVFLALGLISLLENILVIGAI) threads the bilayer. Residues 62-73 (VRNRNLHTPMYF) lie on the Cytoplasmic side of the membrane. A helical transmembrane segment spans residues 74-97 (FVGSLAVADMLVSLSNSWETITIY). Topologically, residues 98 to 114 (LLTNKHLVMADASVRHL) are extracellular. Residues 115 to 138 (DNVFDSMICISVVASMCSLLAIAV) traverse the membrane as a helical segment. Topologically, residues 139 to 155 (DRYVTIFCALRYQRIMT) are cytoplasmic. The helical transmembrane segment at 156-179 (GRRSGAIIGGIWAFCASCGTVFIV) threads the bilayer. At 180–186 (YYESTYV) the chain is on the extracellular side. The chain crosses the membrane as a helical span at residues 187–211 (VICLIAMFLTMLLLMASLYTHMFLL). Residues 212–239 (ARTHIRRIATLPGHSSVRQRTGVKGAIT) lie on the Cytoplasmic side of the membrane. A helical membrane pass occupies residues 240–265 (LAMLLGVFIVCWAPFFLHLILMISCP). Residues 266–273 (HNLYCSCF) are Extracellular-facing. Residues 274–297 (MSHFNMYLILIMCNSVIDPLIYAF) traverse the membrane as a helical segment. At 298 to 325 (RSQEMRKTFKEIVCFQSFRTPCRFPSRY) the chain is on the cytoplasmic side. The S-palmitoyl cysteine moiety is linked to residue Cys-311.

It belongs to the G-protein coupled receptor 1 family.

It localises to the cell membrane. In terms of biological role, receptor for MSH (alpha, beta and gamma) and ACTH. The activity of this receptor is mediated by G proteins which activate adenylate cyclase. This receptor is a possible mediator of the immunomodulation properties of melanocortins. This chain is Melanocortin receptor 5 (MC5R), found in Bos taurus (Bovine).